Reading from the N-terminus, the 347-residue chain is Protein-glutamate methylesterase/protein-glutamine glutaminase (347 aa).

The 118-residue stretch at 6–123 folds into the Response regulatory domain; sequence RVLVVDDSPT…HRPFGDLAEK (118 aa). A 4-aspartylphosphate modification is found at Asp57. The CheB-type methylesterase domain occupies 150 to 342; it reads FRVGRKIVAI…EEILKLTAAR (193 aa). Active-site residues include Ser162, His188, and Asp284.

It belongs to the CheB family. Phosphorylated by CheA. Phosphorylation of the N-terminal regulatory domain activates the methylesterase activity.

It is found in the cytoplasm. It catalyses the reaction [protein]-L-glutamate 5-O-methyl ester + H2O = L-glutamyl-[protein] + methanol + H(+). The enzyme catalyses L-glutaminyl-[protein] + H2O = L-glutamyl-[protein] + NH4(+). In terms of biological role, involved in chemotaxis. Part of a chemotaxis signal transduction system that modulates chemotaxis in response to various stimuli. Catalyzes the demethylation of specific methylglutamate residues introduced into the chemoreceptors (methyl-accepting chemotaxis proteins or MCP) by CheR. Also mediates the irreversible deamidation of specific glutamine residues to glutamic acid. This is Protein-glutamate methylesterase/protein-glutamine glutaminase from Rhizobium etli (strain ATCC 51251 / DSM 11541 / JCM 21823 / NBRC 15573 / CFN 42).